Consider the following 226-residue polypeptide: Cytidylate kinase (226 aa).

Position 9–17 (9–17) interacts with ATP; the sequence is GPAGAGKST.

It belongs to the cytidylate kinase family. Type 1 subfamily.

The protein localises to the cytoplasm. The enzyme catalyses CMP + ATP = CDP + ADP. It carries out the reaction dCMP + ATP = dCDP + ADP. The chain is Cytidylate kinase from Clostridium tetani (strain Massachusetts / E88).